The primary structure comprises 229 residues: ATP-dependent Clp protease proteolytic subunit (229 aa).

S101 serves as the catalytic Nucleophile. H126 is a catalytic residue.

Belongs to the peptidase S14 family. In terms of assembly, component of the chloroplastic Clp protease core complex.

Its subcellular location is the plastid. The protein localises to the chloroplast stroma. The enzyme catalyses Hydrolysis of proteins to small peptides in the presence of ATP and magnesium. alpha-casein is the usual test substrate. In the absence of ATP, only oligopeptides shorter than five residues are hydrolyzed (such as succinyl-Leu-Tyr-|-NHMec, and Leu-Tyr-Leu-|-Tyr-Trp, in which cleavage of the -Tyr-|-Leu- and -Tyr-|-Trp bonds also occurs).. In terms of biological role, cleaves peptides in various proteins in a process that requires ATP hydrolysis. Has a chymotrypsin-like activity. Plays a major role in the degradation of misfolded proteins. In Mesostigma viride (Green alga), this protein is ATP-dependent Clp protease proteolytic subunit.